The following is a 301-amino-acid chain: Sulfate adenylyltransferase subunit 2 (301 aa).

The protein belongs to the PAPS reductase family. CysD subfamily. As to quaternary structure, heterodimer composed of CysD, the smaller subunit, and CysN.

It carries out the reaction sulfate + ATP + H(+) = adenosine 5'-phosphosulfate + diphosphate. The protein operates within sulfur metabolism; hydrogen sulfide biosynthesis; sulfite from sulfate: step 1/3. Functionally, with CysN forms the ATP sulfurylase (ATPS) that catalyzes the adenylation of sulfate producing adenosine 5'-phosphosulfate (APS) and diphosphate, the first enzymatic step in sulfur assimilation pathway. APS synthesis involves the formation of a high-energy phosphoric-sulfuric acid anhydride bond driven by GTP hydrolysis by CysN coupled to ATP hydrolysis by CysD. The polypeptide is Sulfate adenylyltransferase subunit 2 (Geotalea daltonii (strain DSM 22248 / JCM 15807 / FRC-32) (Geobacter daltonii)).